Consider the following 244-residue polypeptide: Proteasome subunit alpha (244 aa).

The protein belongs to the peptidase T1A family. As to quaternary structure, the 20S proteasome core is composed of 14 alpha and 14 beta subunits that assemble into four stacked heptameric rings, resulting in a barrel-shaped structure. The two inner rings, each composed of seven catalytic beta subunits, are sandwiched by two outer rings, each composed of seven alpha subunits. The catalytic chamber with the active sites is on the inside of the barrel. Has a gated structure, the ends of the cylinder being occluded by the N-termini of the alpha-subunits. Is capped by the proteasome-associated ATPase, ARC.

It is found in the cytoplasm. The protein operates within protein degradation; proteasomal Pup-dependent pathway. The formation of the proteasomal ATPase ARC-20S proteasome complex, likely via the docking of the C-termini of ARC into the intersubunit pockets in the alpha-rings, may trigger opening of the gate for substrate entry. Interconversion between the open-gate and close-gate conformations leads to a dynamic regulation of the 20S proteasome proteolysis activity. In terms of biological role, component of the proteasome core, a large protease complex with broad specificity involved in protein degradation. This chain is Proteasome subunit alpha, found in Xylanimonas cellulosilytica (strain DSM 15894 / JCM 12276 / CECT 5975 / KCTC 9989 / LMG 20990 / NBRC 107835 / XIL07).